Consider the following 239-residue polypeptide: Octanoyltransferase (239 aa).

One can recognise a BPL/LPL catalytic domain in the interval 59-239; the sequence is PFSPQAVWLL…KRRFKLNWEK (181 aa). Residues 101–108, 168–170, and 181–183 each bind substrate; these read RGGEVTHH, SIG, and GFS. The active-site Acyl-thioester intermediate is the Cys-199.

This sequence belongs to the LipB family.

The protein resides in the cytoplasm. It carries out the reaction octanoyl-[ACP] + L-lysyl-[protein] = N(6)-octanoyl-L-lysyl-[protein] + holo-[ACP] + H(+). The protein operates within protein modification; protein lipoylation via endogenous pathway; protein N(6)-(lipoyl)lysine from octanoyl-[acyl-carrier-protein]: step 1/2. In terms of biological role, catalyzes the transfer of endogenously produced octanoic acid from octanoyl-acyl-carrier-protein onto the lipoyl domains of lipoate-dependent enzymes. Lipoyl-ACP can also act as a substrate although octanoyl-ACP is likely to be the physiological substrate. The sequence is that of Octanoyltransferase from Prochlorococcus marinus (strain NATL2A).